The chain runs to 228 residues: Pyridoxamine 5'-phosphate oxidase (228 aa).

20–23 (QYDK) provides a ligand contact to pyridoxal 5'-phosphate. K29 is covalently cross-linked (Glycyl lysine isopeptide (Lys-Gly) (interchain with G-Cter in ubiquitin)). 73–76 (RILL) contributes to the FMN binding site. K78 contributes to the pyridoxal 5'-phosphate binding site. FMN contacts are provided by residues 88 to 89 (YS), 95 to 96 (RK), and Q118. Pyridoxal 5'-phosphate is bound by residues Y136, R140, and S144. FMN is bound by residues 153 to 154 (QS) and W199. 205–207 (RLH) is a pyridoxal 5'-phosphate binding site. R209 is a binding site for FMN.

This sequence belongs to the pyridoxamine 5'-phosphate oxidase family. Homodimer. It depends on FMN as a cofactor.

It is found in the mitochondrion intermembrane space. It catalyses the reaction pyridoxamine 5'-phosphate + O2 + H2O = pyridoxal 5'-phosphate + H2O2 + NH4(+). It carries out the reaction pyridoxine 5'-phosphate + O2 = pyridoxal 5'-phosphate + H2O2. It participates in cofactor metabolism; pyridoxal 5'-phosphate salvage; pyridoxal 5'-phosphate from pyridoxamine 5'-phosphate: step 1/1. It functions in the pathway cofactor metabolism; pyridoxal 5'-phosphate salvage; pyridoxal 5'-phosphate from pyridoxine 5'-phosphate: step 1/1. In terms of biological role, catalyzes the oxidation of either pyridoxine 5'-phosphate (PNP) or pyridoxamine 5'-phosphate (PMP) into pyridoxal 5'-phosphate (PLP). The protein is Pyridoxamine 5'-phosphate oxidase (PDX3) of Saccharomyces cerevisiae (strain ATCC 204508 / S288c) (Baker's yeast).